The sequence spans 188 residues: Defensin-like protein 99 (188 aa).

Residues 1-28 (MGSLKLSTVVVTALVVCLSILLISPTEA) form the signal peptide. 7 cysteine pairs are disulfide-bonded: Cys-37/Cys-95, Cys-45/Cys-77, Cys-58/Cys-92, Cys-62/Cys-94, Cys-123/Cys-178, Cys-137/Cys-175, and Cys-141/Cys-177.

Belongs to the DEFL family.

It is found in the secreted. The chain is Defensin-like protein 99 from Arabidopsis thaliana (Mouse-ear cress).